The primary structure comprises 525 residues: Probable metalloreductase AIM14 (525 aa).

7 helical membrane passes run 13-33 (NIKY…YIAV), 52-72 (PLWL…VIHV), 82-102 (FGRL…RPSP), 118-138 (LGRL…VHFV), 152-172 (FLGV…LPFF), 179-199 (LFYT…IFHA), and 203-223 (VGWL…YRVL). Residues 82 to 194 (FGRLCYALLP…YLSAWFVAIA (113 aa)) form the Ferric oxidoreductase domain. An FAD-binding FR-type domain is found at 215-344 (GSSLLYRVLA…GGAGISFALP (130 aa)). A disordered region spans residues 407–478 (LLSEDMEMEE…YHDGRPQPAD (72 aa)). The span at 410–438 (EDMEMEEIGQEDEDRERDELDDLLSEDEG) shows a compositional bias: acidic residues. Over residues 453-463 (GKDQDNGKREA) the composition is skewed to basic and acidic residues.

Belongs to the ferric reductase (FRE) family. AIM14 subfamily.

Its subcellular location is the membrane. Its function is as follows. Probable cell surface metalloreductase. May be involved in iron or copper homeostasis. This Yarrowia lipolytica (strain CLIB 122 / E 150) (Yeast) protein is Probable metalloreductase AIM14 (AIM14).